Reading from the N-terminus, the 150-residue chain is Viral late gene transcription factor 2 (150 aa).

Belongs to the orthopoxvirus VLTF-2/OPG126 family. As to quaternary structure, interacts with itself. Interacts with the late transcription factors VLTF-1/OPG093.

Acts with RNA polymerase to initiate transcription from late gene promoters. The sequence is that of Viral late gene transcription factor 2 (OPG126) from Vaccinia virus (strain Copenhagen) (VACV).